The chain runs to 337 residues: DNA-directed RNA polymerase subunit alpha (337 aa).

Positions 1 to 233 (MVREEVAGST…DLFLPFLHTE (233 aa)) are alpha N-terminal domain (alpha-NTD). The alpha C-terminal domain (alpha-CTD) stretch occupies residues 267-337 (IPLNCIFIDQ…LPMDLPKNKF (71 aa)).

It belongs to the RNA polymerase alpha chain family. In terms of assembly, in plastids the minimal PEP RNA polymerase catalytic core is composed of four subunits: alpha, beta, beta', and beta''. When a (nuclear-encoded) sigma factor is associated with the core the holoenzyme is formed, which can initiate transcription.

It is found in the plastid. The protein localises to the chloroplast. It carries out the reaction RNA(n) + a ribonucleoside 5'-triphosphate = RNA(n+1) + diphosphate. DNA-dependent RNA polymerase catalyzes the transcription of DNA into RNA using the four ribonucleoside triphosphates as substrates. The protein is DNA-directed RNA polymerase subunit alpha of Oryza nivara (Indian wild rice).